We begin with the raw amino-acid sequence, 535 residues long: Probable fucosyltransferase 4 (535 aa).

Residues 1–20 (MYHIFQISGEVIKGLGLKTK) lie on the Cytoplasmic side of the membrane. Residues 21–41 (ILITIVFSTLLILSVMLLSFS) traverse the membrane as a helical; Signal-anchor for type II membrane protein segment. At 42–535 (NNFNNKLFAA…IWGLKLFDEL (494 aa)) the chain is on the lumenal side. Residues Asn136, Asn226, Asn230, Asn377, and Asn409 are each glycosylated (N-linked (GlcNAc...) asparagine).

This sequence belongs to the glycosyltransferase 37 family. As to expression, expressed in roots, stems, leaves, flowers, siliques and seedlings.

Its subcellular location is the golgi apparatus. It is found in the golgi stack membrane. Its pathway is protein modification; protein glycosylation. Its function is as follows. May be involved in cell wall biosynthesis. May act as a fucosyltransferase. The polypeptide is Probable fucosyltransferase 4 (FUT4) (Arabidopsis thaliana (Mouse-ear cress)).